We begin with the raw amino-acid sequence, 166 residues long: Phospholipase A2 inhibitor (166 aa).

A signal peptide spans 1-19 (MRLILLSGLLLLGIFLANG). In terms of domain architecture, C-type lectin spans 46-161 (LRGAFLTVYK…CDDNLLVVCE (116 aa)). Residues N61 and N122 are each glycosylated (N-linked (GlcNAc...) asparagine). 2 disulfide bridges follow: C83–C160 and C138–C152.

The protein belongs to the alpha-type phospholipase A2 inhibitor family. In terms of assembly, homotrimer; non-covalently linked. In terms of tissue distribution, expressed by the liver.

Its subcellular location is the secreted. In terms of biological role, this phospholipase A2 inhibitor binds directly phospholipase A2 in the presence or absence of calcium. The sequence is that of Phospholipase A2 inhibitor from Bothrops alternatus (Urutu).